Consider the following 181-residue polypeptide: NAD(P)H-quinone oxidoreductase subunit 6, chloroplastic (181 aa).

A run of 5 helical transmembrane segments spans residues threonine 10–leucine 30, valine 33–leucine 53, alanine 62–valine 82, isoleucine 98–threonine 118, and leucine 153–isoleucine 173.

The protein belongs to the complex I subunit 6 family. NDH is composed of at least 16 different subunits, 5 of which are encoded in the nucleus.

It localises to the plastid. It is found in the chloroplast thylakoid membrane. It carries out the reaction a plastoquinone + NADH + (n+1) H(+)(in) = a plastoquinol + NAD(+) + n H(+)(out). The enzyme catalyses a plastoquinone + NADPH + (n+1) H(+)(in) = a plastoquinol + NADP(+) + n H(+)(out). In terms of biological role, NDH shuttles electrons from NAD(P)H:plastoquinone, via FMN and iron-sulfur (Fe-S) centers, to quinones in the photosynthetic chain and possibly in a chloroplast respiratory chain. The immediate electron acceptor for the enzyme in this species is believed to be plastoquinone. Couples the redox reaction to proton translocation, and thus conserves the redox energy in a proton gradient. In Zygnema circumcarinatum (Green alga), this protein is NAD(P)H-quinone oxidoreductase subunit 6, chloroplastic (ndhG).